The chain runs to 508 residues: Protein FAM227B (508 aa).

Disordered regions lie at residues 1–22 and 485–508; these read MAGQRTCQRRSSRAGPGKMQEP and ASLSSSSSSSPSSTDNYNFEEEEY. Residues 486–497 are compositionally biased toward low complexity; it reads SLSSSSSSSPSS.

This sequence belongs to the FAM227 family.

This is Protein FAM227B (FAM227B) from Homo sapiens (Human).